The following is a 360-amino-acid chain: Homoserine O-acetyltransferase (360 aa).

The 304-residue stretch at 41 to 344 (NAILICHALT…DYGHDAFLVD (304 aa)) folds into the AB hydrolase-1 domain. The Nucleophile role is filled by S144. R213 contacts substrate. Catalysis depends on residues D305 and H338. D339 serves as a coordination point for substrate.

The protein belongs to the AB hydrolase superfamily. MetX family. In terms of assembly, homodimer.

Its subcellular location is the cytoplasm. It catalyses the reaction L-homoserine + acetyl-CoA = O-acetyl-L-homoserine + CoA. It participates in amino-acid biosynthesis; L-methionine biosynthesis via de novo pathway; O-acetyl-L-homoserine from L-homoserine: step 1/1. Functionally, transfers an acetyl group from acetyl-CoA to L-homoserine, forming acetyl-L-homoserine. The chain is Homoserine O-acetyltransferase from Pasteurella multocida (strain Pm70).